The chain runs to 196 residues: SAGA-associated factor 11 homolog (196 aa).

The segment at 1–22 (MSAANMPTTTGAQGSGNQVPTT) is disordered. The SGF11-type zinc finger occupies 106-127 (CTCPNCDRLVAAARFAPHLEKC). The interval 141–196 (RLATKEGATSAHLHSSGNTGGTDDEDDVDWSSDKRRKKSNQNSRNNGSKKNNGKTF) is disordered. At Ser-172 the chain carries Phosphoserine. Positions 180–196 (NQNSRNNGSKKNNGKTF) are enriched in low complexity.

Belongs to the SGF11 family. As to quaternary structure, component of some SAGA transcription coactivator-HAT complexes, at least composed of Ada2b, not/nonstop, Pcaf/Gcn5, Sgf11 and Spt3. Within the SAGA complex, Sgf11, e(y)2, and not/nonstop form an additional subcomplex of SAGA called the DUB module (deubiquitination module). Interacts directly with not/nonstop. Interacts with the AMEX complex component xmas-2. Interacts with Cbp80; important for promoter recruitment of Sgf11 that is not associated with the DUB module.

Its subcellular location is the nucleus. It is found in the nucleoplasm. The protein resides in the cytoplasm. Component of the transcription regulatory histone acetylation (HAT) complex SAGA, a multiprotein complex that activates transcription by remodeling chromatin and mediating histone acetylation and deubiquitination. Within the SAGA complex, participates in a subcomplex that specifically deubiquitinates histone H2B. The SAGA complex is recruited to specific gene promoters by activators, where it is required for transcription. Required for nuclear receptor-mediated transactivation. Binds independently on SAGA to promoters in an RNA-dependent manner. Binds to mRNA and is essential for total mRNA export from the nucleus. Required to counteract heterochromatin silencing. Controls the development of neuronal connectivity in visual system by being required for accurate axon targeting in the optic lobe. Required for expression of ecdysone-induced genes such as br/broad. In Drosophila simulans (Fruit fly), this protein is SAGA-associated factor 11 homolog.